Reading from the N-terminus, the 46-residue chain is Light-harvesting protein B-800/850 beta 2 chain (46 aa).

Over 2 to 25 (AERSLSGLTEEEAVAVHAQFQTTF) the chain is Cytoplasmic. A bacteriochlorophyll-binding residues include histidine 18 and histidine 36. Residues 26-46 (SAFIVLAAVAHVLVWVWKPWF) traverse the membrane as a helical segment.

The protein belongs to the antenna complex beta subunit family. In terms of assembly, the core complex is formed by different alpha and beta chains, binding bacteriochlorophyll molecules, and arranged most probably in tetrameric structures disposed around the reaction center.

The protein localises to the cell inner membrane. Antenna complexes are light-harvesting systems, which transfer the excitation energy to the reaction centers. This chain is Light-harvesting protein B-800/850 beta 2 chain (B2), found in Magnetospirillum molischianum (Rhodospirillum molischianum).